Consider the following 167-residue polypeptide: MSLLPILYYPDHRLRQISKPVNKINNSIYRIVYDMFDTMYHKNGIGLAAPQVNINLNIIVIDVSENKEQRLVLINPELLAKSGETGIHEGCLSIPEQHGFVPRAKNIKVRALDLNGNSFNLETNDLQAICIQHEMDHLVGKLFIDYLSPLKRQRLLKKMKQLIRNLD.

Residues Cys91 and His133 each coordinate Fe cation. Glu134 is a catalytic residue. His137 contributes to the Fe cation binding site.

This sequence belongs to the polypeptide deformylase family. Fe(2+) serves as cofactor.

It carries out the reaction N-terminal N-formyl-L-methionyl-[peptide] + H2O = N-terminal L-methionyl-[peptide] + formate. In terms of biological role, removes the formyl group from the N-terminal Met of newly synthesized proteins. Requires at least a dipeptide for an efficient rate of reaction. N-terminal L-methionine is a prerequisite for activity but the enzyme has broad specificity at other positions. This chain is Peptide deformylase, found in Baumannia cicadellinicola subsp. Homalodisca coagulata.